The sequence spans 2325 residues: Protein Ycf2 (2325 aa).

Disordered regions lie at residues 168 to 189 (SSQL…GTED), 221 to 251 (TEIE…EMNN), and 947 to 1006 (KRKK…KRKE). The span at 230–240 (KGLSGSSSKSR) shows a compositional bias: low complexity. Composition is skewed to basic and acidic residues over residues 241-250 (LFTEGEKEMN) and 955-1004 (KRKE…PEKR). 1436 to 1443 (GSIGSGRS) is an ATP binding site. Disordered regions lie at residues 1510 to 1529 (YEDR…DYEP), 1855 to 1996 (LVGS…LLRP), and 2063 to 2179 (PAEE…DGFS). Positions 1861-1976 (TEEEVEGTEE…VEGTEDEEGE (116 aa)) are enriched in acidic residues. Residues 1977-1989 (GTEKDSSQFDNDR) are compositionally biased toward basic and acidic residues. 2 stretches are compositionally biased toward acidic residues: residues 2063 to 2080 (PAEE…EALE) and 2087 to 2162 (GEEE…ENDS).

Belongs to the Ycf2 family.

Its subcellular location is the plastid. The protein resides in the chloroplast stroma. In terms of biological role, probable ATPase of unknown function. Its presence in a non-photosynthetic plant (Epifagus virginiana) and experiments in tobacco indicate that it has an essential function which is probably not related to photosynthesis. The polypeptide is Protein Ycf2 (Oenothera biennis (German evening primrose)).